We begin with the raw amino-acid sequence, 286 residues long: Meiotically up-regulated gene 64 protein (286 aa).

The protein localises to the cytoplasm. Has a role in meiosis. The chain is Meiotically up-regulated gene 64 protein (mug64) from Schizosaccharomyces pombe (strain 972 / ATCC 24843) (Fission yeast).